Reading from the N-terminus, the 111-residue chain is Disintegrin DS-AN (111 aa).

The first 20 residues, 1-20, serve as a signal peptide directing secretion; it reads MIQVLLVIICLAVFPYQGSC. The propeptide occupies 21-47; that stretch reads IILESGNVNDYEIVYPKKLIVLPTGAM. The Disintegrin domain maps to 47-111; that stretch reads MNSPHPCCDP…PDCPRNPYKD (65 aa). 4 disulfides stabilise this stretch: Cys-53–Cys-76, Cys-67–Cys-73, Cys-72–Cys-97, and Cys-85–Cys-104. A Cell attachment site motif is present at residues 89–91; that stretch reads RGD.

In terms of assembly, heterodimer; disulfide-linked.

It localises to the secreted. Functionally, inhibits ADP-induced platelet aggregation in human platelet-rich plasma (IC(50) is 8 uM). The protein is Disintegrin DS-AN of Atheris nitschei (Great lakes bush viper).